Here is a 210-residue protein sequence, read N- to C-terminus: Prolactin (210 aa).

The first 23 residues, methionine 1–glycine 23, serve as a signal peptide directing secretion. 2 cysteine pairs are disulfide-bonded: cysteine 69–cysteine 183 and cysteine 200–cysteine 210.

Belongs to the somatotropin/prolactin family. As to expression, pituitary gland.

It localises to the secreted. This chain is Prolactin (prl1), found in Carassius auratus (Goldfish).